We begin with the raw amino-acid sequence, 49 residues long: Delta-actitoxin-Axm1h (49 aa).

Disulfide bonds link Cys-4–Cys-46, Cys-6–Cys-36, and Cys-29–Cys-47.

Belongs to the sea anemone sodium channel inhibitory toxin family. Type I subfamily.

The protein resides in the secreted. The protein localises to the nematocyst. Binds specifically to voltage-gated sodium channels (Nav) (site 3), thereby delaying their inactivation during signal transduction. Thus it may strongly stimulate mammalian cardiac muscle contraction. The polypeptide is Delta-actitoxin-Axm1h (Anthopleura xanthogrammica (Giant green sea anemone)).